The sequence spans 517 residues: Fluconazole resistance protein 1 (517 aa).

A DNA-binding region (zn(2)-C6 fungal-type) is located at residues 26-52; sequence CDSCRIKKTKCDGKKPCNRCTLDNKIC. Disordered regions lie at residues 106 to 137, 250 to 270, 284 to 307, and 378 to 403; these read KSVD…QNST, SAQF…QQQQ, SDIE…PPTS, and GSIQ…VSSF. Residues 113–124 show a composition bias toward low complexity; the sequence is SSPASSTPNSSS. Residues 250-260 are compositionally biased toward polar residues; that stretch reads SAQFSKGTFSP. The span at 261–270 shows a compositional bias: low complexity; sequence QQQQLQQQQQ. A compositionally biased stretch (polar residues) spans 298 to 307; it reads NSGSVSPPTS. The span at 388–398 shows a compositional bias: basic residues; sequence GSVHKPVRNHS.

It localises to the nucleus. Transcription factor that acts as a negative regulator of fluconazole resistance in C.albicans. Also confers fluconazole resistance in S.cerevisiae by activation of the PDR5 gene. In Candida albicans (Yeast), this protein is Fluconazole resistance protein 1 (FCR1).